Here is a 532-residue protein sequence, read N- to C-terminus: Tyrosine-protein kinase Src-1 (532 aa).

Positions 1 to 52 (MGATKSKPREGGPRSRSLDIVEGSHQPFTSLSASQTPNKSLDSHRPPAQPFG) are disordered. G2 is lipidated: N-myristoyl glycine. The segment covering 7–19 (KPREGGPRSRSLD) has biased composition (basic and acidic residues). The span at 26–40 (QPFTSLSASQTPNKS) shows a compositional bias: polar residues. Residues 80–141 (GGVTTFVALY…PSNYVAPSDS (62 aa)) enclose the SH3 domain. The region spanning 147-244 (WYLGKITRRE…GLCHRLTTVC (98 aa)) is the SH2 domain. The 254-residue stretch at 266–519 (LRLELKLGQG…YLQAFLEDYF (254 aa)) folds into the Protein kinase domain. Residues 272–280 (LGQGCFGEV) and K294 contribute to the ATP site. D385 acts as the Proton acceptor in catalysis. The residue at position 415 (Y415) is a Phosphotyrosine; by autocatalysis.

This sequence belongs to the protein kinase superfamily. Tyr protein kinase family. SRC subfamily.

It localises to the cell membrane. The enzyme catalyses L-tyrosyl-[protein] + ATP = O-phospho-L-tyrosyl-[protein] + ADP + H(+). This is Tyrosine-protein kinase Src-1 (src-a) from Xenopus laevis (African clawed frog).